The following is a 117-amino-acid chain: Large ribosomal subunit protein uL18 (117 aa).

The protein belongs to the universal ribosomal protein uL18 family. In terms of assembly, part of the 50S ribosomal subunit; part of the 5S rRNA/L5/L18/L25 subcomplex. Contacts the 5S and 23S rRNAs.

This is one of the proteins that bind and probably mediate the attachment of the 5S RNA into the large ribosomal subunit, where it forms part of the central protuberance. The polypeptide is Large ribosomal subunit protein uL18 (Yersinia enterocolitica serotype O:8 / biotype 1B (strain NCTC 13174 / 8081)).